The sequence spans 464 residues: GTPase Der (464 aa).

2 consecutive EngA-type G domains span residues 3-166 and 177-350; these read ALVA…PVLE and LQFA…QSAN. Residues 9–16, 56–60, 118–121, 183–190, 230–234, and 295–298 contribute to the GTP site; these read GRPNVGKS, DTGGV, NKAE, DTAGI, and NKWD. Positions 351 to 435 constitute a KH-like domain; it reads SHLPTGELNR…PIALEFRTVK (85 aa).

This sequence belongs to the TRAFAC class TrmE-Era-EngA-EngB-Septin-like GTPase superfamily. EngA (Der) GTPase family. In terms of assembly, associates with the 50S ribosomal subunit.

Functionally, GTPase that plays an essential role in the late steps of ribosome biogenesis. This Nitrosococcus oceani (strain ATCC 19707 / BCRC 17464 / JCM 30415 / NCIMB 11848 / C-107) protein is GTPase Der.